Consider the following 293-residue polypeptide: DOMON domain-containing protein FRRS1L (293 aa).

Residues 1–28 form the signal peptide; sequence MARPPRQHPGVWASLLLLLLTGPAACAA. Positions 29–61 are disordered; that stretch reads SPADDGAGPGGRGPRGRARGDTGADEAVPRHDS. A compositionally biased stretch (basic and acidic residues) spans 46–61; that stretch reads ARGDTGADEAVPRHDS. The region spanning 119–234 is the DOMON domain; that stretch reads CDYFLSYRMI…WYYLFAWGPA (116 aa). Residues 271 to 291 form a helical membrane-spanning segment; sequence TFSSPFCLLLIVALTFYLLMG.

As to quaternary structure, component of the outer core of AMPAR complex. AMPAR complex consists of an inner core made of 4 pore-forming GluA/GRIA proteins (GRIA1, GRIA2, GRIA3 and GRIA4) and 4 major auxiliary subunits arranged in a twofold symmetry. One of the two pairs of distinct binding sites is occupied either by CNIH2, CNIH3 or CACNG2, CACNG3. The other harbors CACNG2, CACNG3, CACNG4, CACNG8 or GSG1L. This inner core of AMPAR complex is complemented by outer core constituents binding directly to the GluA/GRIA proteins at sites distinct from the interaction sites of the inner core constituents. Outer core constituents include at least PRRT1, PRRT2, CKAMP44/SHISA9, FRRS1L and NRN1. The proteins of the inner and outer core serve as a platform for other, more peripherally associated AMPAR constituents. Alone or in combination, these auxiliary subunits control the gating and pharmacology of the AMPAR complex and profoundly impact their biogenesis and protein processing. Expressed in adult and fetal brain. Very weak expression in medulla, spinal cord and in adult ovary.

It is found in the cell membrane. The protein resides in the synapse. Its function is as follows. Important modulator of glutamate signaling pathway. In Homo sapiens (Human), this protein is DOMON domain-containing protein FRRS1L (FRRS1L).